The chain runs to 504 residues: MFSFGTVFTFALLLIPLTEAVDSSYVAAVYEHNLILNPDPRVPLSRLEALQHLQKNLDIFEVQAARAAQQGAQIIVFPEDGLHGFNFSRTSISAYLETVPDPEQESWNPCLEPLRHNNTEVLQQLSCMARRNNLYLVANMADLQPCSVSAAPSSCPPDGRWQFNTNVVFRSDGLLVARYHKYNLYFEAAFDAPPEPEIVTFDTPFAGKFGLITCFDILFQEPTVILVEKGVRQIIFPAAWMNQLPLLDIIQFQRAFSLGANVTLLAANIRNDQLIMTGSGIYTPFSATYHHAQRGDPEEGRLLVARVPVLDPEWLGHNAASGEAAAVDESSGYCYSETCLDSPASTAPVFVSSMMYDPFTFALLNATDGEMRVCNGTFCCYLQYRWVTETGRTELYALGAFDGTHTVNGRYAVQVCALVRCAGSDASSCGQEVDEAESKLDFMLEGKFASRHVYPSVLSSGMVLEQPERVEAAADGRVSLKHSNVMGGLVTACLYGRMHHLDTA.

The signal sequence occupies residues 1–20 (MFSFGTVFTFALLLIPLTEA). The 280-residue stretch at 30–309 (YEHNLILNPD…GRLLVARVPV (280 aa)) folds into the CN hydrolase domain. The active-site Proton acceptor is the Glu79. Residues Asn86 and Asn117 are each glycosylated (N-linked (GlcNAc...) asparagine). Lys181 (proton donor) is an active-site residue. Cys214 serves as the catalytic Nucleophile. Residues Asn261, Asn365, and Asn375 are each glycosylated (N-linked (GlcNAc...) asparagine).

It belongs to the carbon-nitrogen hydrolase superfamily. BTD/VNN family.

The protein localises to the secreted. It is found in the extracellular space. It catalyses the reaction biocytin + H2O = biotin + L-lysine. It carries out the reaction biotin amide + H2O = biotin + NH4(+). In terms of biological role, catalytic release of biotin from biocytin, the product of biotin-dependent carboxylases degradation. In Takifugu rubripes (Japanese pufferfish), this protein is Biotinidase (btd).